Here is a 202-residue protein sequence, read N- to C-terminus: MIVKICGLKKAVDVAAAVDNGADMIGFVFAKSKRQVTVEKAHELAKNIPANVKKVGVFVNPTEEELKAAIKGVPLDIVQLHGQEPAKQANRTDAKVIKAFPVKDGKLPTNINDYPNAYILLDAPAEEYEGGSGKTFDWDKINRDMLTKNKLIIAGGLNAQNVQEAIKRFEPYAVDISSGVETNGEKDPEKIKCFIKTAKGVE.

It belongs to the TrpF family.

The enzyme catalyses N-(5-phospho-beta-D-ribosyl)anthranilate = 1-(2-carboxyphenylamino)-1-deoxy-D-ribulose 5-phosphate. It participates in amino-acid biosynthesis; L-tryptophan biosynthesis; L-tryptophan from chorismate: step 3/5. The protein is N-(5'-phosphoribosyl)anthranilate isomerase of Listeria monocytogenes serotype 4b (strain F2365).